The sequence spans 181 residues: Oligoribonuclease (181 aa).

The Exonuclease domain maps to 8-171 (LIWVDLEMTG…DDIRESIAEL (164 aa)). Residue Y129 is part of the active site.

It belongs to the oligoribonuclease family.

Its subcellular location is the cytoplasm. 3'-to-5' exoribonuclease specific for small oligoribonucleotides. The protein is Oligoribonuclease of Vibrio campbellii (strain ATCC BAA-1116).